The chain runs to 561 residues: MQSYSIPFHSISEGGKQFSQLFLDYTSNTLATDALISQFYQHDYRNPAHLSAQIQTVSGRTYQRPELVLELTRQNQLFGSGPKTFERIQSLLSKKTLAVVTGQQVGFLTGPVYTIYKTLSAIVLTEKWHEHYPDFEFVPVFWLESEDHDYEEISHVSLLKGNSLERFSYSEASYQALSSAGATQITPEFLDWLGKEILEAFPESDYKQKMLTLVRESYKEGVSYEMAFATLLARLFYDEGLIIVSSHPKGFKTLAKSVFIRELETFPASSQNIIAQSARLEESGYDAQAKPRPINLYFFQENQRLKIEPRRQGSVELLPGKTTFSQHEMLEFAHSAPELFSPNVVLRPIVQDTVLPTVAYVAGPGEISYFGQFLRNYQFFNIPMPIIYPRASLSLLEPKISRVFEKSARILNEKEISGSLSRFYQNSQQFINELLLAASTVDIEDEATTAIQGLSDIFKKFGLKLSEIDPTLAQSVEKVMQSTLNQVENLKSKTIKAEKQRHNDLIAQIEKSRDNLLPGGVLQERVLNGFHFFNKFDTTLIKLLKELLLTKAFDKHLIVPL.

A coiled-coil region spans residues 472–517 (LAQSVEKVMQSTLNQVENLKSKTIKAEKQRHNDLIAQIEKSRDNLL).

Belongs to the BshC family.

The chain is Putative cysteine ligase BshC from Chloroherpeton thalassium (strain ATCC 35110 / GB-78).